Consider the following 183-residue polypeptide: UPF0397 protein VFMJ11_1662 (183 aa).

Helical transmembrane passes span 8–28 (VVVIAIGAALYGIGGLPMFGI), 41–61 (AVLALFSVLYGPIVGFLVGFI), 75–95 (WLTWVLGSGIVGMIIGLFPII), 110–130 (FLIFVVLAFFGNVFGYGTSAF), and 147–167 (LCIIAAGNTFLIAIVGYFILN).

Belongs to the UPF0397 family.

Its subcellular location is the cell membrane. The sequence is that of UPF0397 protein VFMJ11_1662 from Aliivibrio fischeri (strain MJ11) (Vibrio fischeri).